Reading from the N-terminus, the 162-residue chain is Transcription elongation factor GreA (162 aa).

Residues 1–28 (MQKEPMLEETYRKLSEELEQLKSVERGV) are a coiled coil.

It belongs to the GreA/GreB family.

Necessary for efficient RNA polymerase transcription elongation past template-encoded arresting sites. The arresting sites in DNA have the property of trapping a certain fraction of elongating RNA polymerases that pass through, resulting in locked ternary complexes. Cleavage of the nascent transcript by cleavage factors such as GreA or GreB allows the resumption of elongation from the new 3'terminus. GreA releases sequences of 2 to 3 nucleotides. This Sulfurovum sp. (strain NBC37-1) protein is Transcription elongation factor GreA.